Reading from the N-terminus, the 226-residue chain is Elongation factor G (226 aa).

This sequence belongs to the GTP-binding elongation factor family. EF-G/EF-2 subfamily.

Its subcellular location is the cytoplasm. Functionally, catalyzes the GTP-dependent ribosomal translocation step during translation elongation. During this step, the ribosome changes from the pre-translocational (PRE) to the post-translocational (POST) state as the newly formed A-site-bound peptidyl-tRNA and P-site-bound deacylated tRNA move to the P and E sites, respectively. Catalyzes the coordinated movement of the two tRNA molecules, the mRNA and conformational changes in the ribosome. The protein is Elongation factor G (fusA) of Neisseria gonorrhoeae.